An 805-amino-acid polypeptide reads, in one-letter code: Cell division cycle 5-related protein (805 aa).

HTH myb-type domains follow at residues 1 to 58 (MPRI…DPSI) and 59 to 108 (KKTE…DQAQ). DNA-binding regions (H-T-H motif) lie at residues 31 to 54 (WSRI…YEWL) and 82 to 104 (WRTI…EYLL). Residues 108–127 (QAKEGDKDEGDDPRKLRPGE) are compositionally biased toward basic and acidic residues. 4 disordered regions span residues 108–143 (QAKE…DPID), 246–293 (HLEG…HVKK), 409–442 (LSTP…QRSV), and 530–556 (LERR…VLRP). Residues 142-193 (IDMDEDELEMLSEARARLANTQGKKAKRKAREKQLEEARRLAALQKRRELRA) are a coiled coil. The segment covering 246-274 (HLEGKMRDEIEQQERKKDKERMKKKKESD) has biased composition (basic and acidic residues). 2 coiled-coil regions span residues 511–542 (EDAA…VQRE) and 678–804 (YTRA…SKLQ).

It belongs to the CEF1 family. In terms of assembly, component of the precatalytic, catalytic and postcatalytic spliceosome complexes.

The protein resides in the nucleus. The protein localises to the cytoplasm. Its function is as follows. DNA-binding protein involved in cell cycle control. May act as a transcription activator. Plays a role in pre-mRNA splicing as core component of precatalytic, catalytic and postcatalytic spliceosomal complexes. May also play a role in the response to DNA damage (DDR). The chain is Cell division cycle 5-related protein (cdc5l) from Nematostella vectensis (Starlet sea anemone).